The following is a 443-amino-acid chain: 2-hydroxyethylphosphonate dioxygenase (443 aa).

Residues 8–63 enclose the HTH cro/C1-type 1 domain; that stretch reads LAHWMNARKYTAAQTADLAGLPLDDLRRLLGDEANEPDPAAATALAEALSVEPSQL. Lys16 serves as a coordination point for substrate. Positions 19-38 form a DNA-binding region, H-T-H motif; the sequence is AAQTADLAGLPLDDLRRLLG. The substrate site is built by Tyr98 and Asn126. His129 contacts Fe cation. Substrate-binding residues include Glu176, His182, and Ser196. His182 lines the Fe cation pocket. Residues 234 to 290 enclose the HTH cro/C1-type 2 domain; the sequence is VLDLFLARRAHTRTSAAEAAGVPPADLEAALRSPASETGLTVLRTLGRALGFDYRVL. The H-T-H motif DNA-binding region spans 245-265; that stretch reads TRTSAAEAAGVPPADLEAALR.

Belongs to the non-heme iron-dependent dioxygenase family. In terms of assembly, homodimer. Fe(2+) is required as a cofactor.

The catalysed reaction is 2-hydroxyethylphosphonate + O2 = hydroxymethylphosphonate + formate + H(+). It participates in secondary metabolite biosynthesis; bialaphos biosynthesis. Its function is as follows. Non-heme-dependent dioxygenase that catalyzes the conversion of 2-hydroxyethylphosphonate (HEP) to hydroxymethylphosphonate (HMP) in the biosynthesis of phosphinothricin tripeptide (PTT), also known as bialaphos (BA), a natural-product antibiotic and potent herbicide. PTT contains the unusual amino acid phosphinothricin attached to 2 alanine residues. Synthetic phosphinothricin (glufosinate) is a key component of commercial herbicides. The chain is 2-hydroxyethylphosphonate dioxygenase (hepD) from Streptomyces viridochromogenes (strain DSM 40736 / JCM 4977 / BCRC 1201 / Tue 494).